An 800-amino-acid chain; its full sequence is Ent-copalyl diphosphate synthase 2, chloroplastic (800 aa).

A chloroplast-targeting transit peptide spans 1–47 (MQMQVLTAASSLPRATLLRPAAAEPWRQSFLQLQARPIQRPGIMLHC). Residues 52–80 (QGQETRERRQLDDDEHARPPQGGDDDVAA) are disordered. Residues 55 to 69 (ETRERRQLDDDEHAR) are compositionally biased toward basic and acidic residues. A substrate-binding site is contributed by lysine 242. Positions 374 and 376 each coordinate Mg(2+). The DXDD motif motif lies at 374–377 (DIDD). Lysine 461 is a binding site for substrate.

Belongs to the terpene synthase family. It depends on Mg(2+) as a cofactor.

Its subcellular location is the plastid. It is found in the chloroplast. The enzyme catalyses (2E,6E,10E)-geranylgeranyl diphosphate = ent-copalyl diphosphate. The protein operates within secondary metabolite biosynthesis; terpenoid biosynthesis. Catalyzes the conversion of geranylgeranyl diphosphate to the phytoalexin precursor ent-copalyl diphosphate. The sequence is that of Ent-copalyl diphosphate synthase 2, chloroplastic from Oryza sativa subsp. japonica (Rice).